The chain runs to 661 residues: UvrABC system protein B (661 aa).

A Helicase ATP-binding domain is found at 25-182; the sequence is AGLSSKKRSQ…NDLINLQYER (158 aa). ATP is bound at residue 38-45; it reads GITGSGKT. Residues 91 to 114 carry the Beta-hairpin motif; the sequence is YYDYYQPEAYIARTDTFIEKDSSI. The Helicase C-terminal domain maps to 430–592; that stretch reads QVEDLISEIQ…IIPKTINRAI (163 aa). In terms of domain architecture, UVR spans 621-656; the sequence is KTHIDKLKKEMLKAASNLEFEQAVKLRDQLKTLEAA.

Belongs to the UvrB family. Forms a heterotetramer with UvrA during the search for lesions. Interacts with UvrC in an incision complex.

It localises to the cytoplasm. In terms of biological role, the UvrABC repair system catalyzes the recognition and processing of DNA lesions. A damage recognition complex composed of 2 UvrA and 2 UvrB subunits scans DNA for abnormalities. Upon binding of the UvrA(2)B(2) complex to a putative damaged site, the DNA wraps around one UvrB monomer. DNA wrap is dependent on ATP binding by UvrB and probably causes local melting of the DNA helix, facilitating insertion of UvrB beta-hairpin between the DNA strands. Then UvrB probes one DNA strand for the presence of a lesion. If a lesion is found the UvrA subunits dissociate and the UvrB-DNA preincision complex is formed. This complex is subsequently bound by UvrC and the second UvrB is released. If no lesion is found, the DNA wraps around the other UvrB subunit that will check the other stand for damage. The polypeptide is UvrABC system protein B (Rickettsia peacockii (strain Rustic)).